A 217-amino-acid chain; its full sequence is Octanoyltransferase (217 aa).

A BPL/LPL catalytic domain is found at 34-216; the sequence is SETRDELWLL…AASRASRHDR (183 aa). Substrate-binding positions include 73-80, 140-142, and 153-155; these read RGGQVTWH, ALG, and GLS. The Acyl-thioester intermediate role is filled by C171.

It belongs to the LipB family.

The protein resides in the cytoplasm. The enzyme catalyses octanoyl-[ACP] + L-lysyl-[protein] = N(6)-octanoyl-L-lysyl-[protein] + holo-[ACP] + H(+). Its pathway is protein modification; protein lipoylation via endogenous pathway; protein N(6)-(lipoyl)lysine from octanoyl-[acyl-carrier-protein]: step 1/2. Functionally, catalyzes the transfer of endogenously produced octanoic acid from octanoyl-acyl-carrier-protein onto the lipoyl domains of lipoate-dependent enzymes. Lipoyl-ACP can also act as a substrate although octanoyl-ACP is likely to be the physiological substrate. This is Octanoyltransferase from Halorhodospira halophila (strain DSM 244 / SL1) (Ectothiorhodospira halophila (strain DSM 244 / SL1)).